The primary structure comprises 104 residues: Flagellar hook-basal body complex protein FliE (104 aa).

It belongs to the FliE family.

It localises to the bacterial flagellum basal body. This chain is Flagellar hook-basal body complex protein FliE, found in Salmonella heidelberg (strain SL476).